Reading from the N-terminus, the 120-residue chain is Large ribosomal subunit protein bL17 (120 aa).

This sequence belongs to the bacterial ribosomal protein bL17 family. Part of the 50S ribosomal subunit. Contacts protein L32.

This Mesomycoplasma hyopneumoniae (strain 232) (Mycoplasma hyopneumoniae) protein is Large ribosomal subunit protein bL17.